A 122-amino-acid polypeptide reads, in one-letter code: Large ribosomal subunit protein uL18 (122 aa).

Residues 1-16 (MFKKVDRKASRQKKQM) show a composition bias toward basic residues. The interval 1–29 (MFKKVDRKASRQKKQMSIRNKISGTPERP) is disordered.

This sequence belongs to the universal ribosomal protein uL18 family. Part of the 50S ribosomal subunit; part of the 5S rRNA/L5/L18/L25 subcomplex. Contacts the 5S and 23S rRNAs.

This is one of the proteins that bind and probably mediate the attachment of the 5S RNA into the large ribosomal subunit, where it forms part of the central protuberance. The protein is Large ribosomal subunit protein uL18 of Fusobacterium nucleatum subsp. nucleatum (strain ATCC 25586 / DSM 15643 / BCRC 10681 / CIP 101130 / JCM 8532 / KCTC 2640 / LMG 13131 / VPI 4355).